A 121-amino-acid chain; its full sequence is ATP synthase epsilon chain (121 aa).

This sequence belongs to the ATPase epsilon chain family. F-type ATPases have 2 components, CF(1) - the catalytic core - and CF(0) - the membrane proton channel. CF(1) has five subunits: alpha(3), beta(3), gamma(1), delta(1), epsilon(1). CF(0) has three main subunits: a, b and c.

It is found in the cell membrane. Its function is as follows. Produces ATP from ADP in the presence of a proton gradient across the membrane. The protein is ATP synthase epsilon chain of Mycolicibacterium vanbaalenii (strain DSM 7251 / JCM 13017 / BCRC 16820 / KCTC 9966 / NRRL B-24157 / PYR-1) (Mycobacterium vanbaalenii).